The sequence spans 178 residues: Large ribosomal subunit protein uL6 (178 aa).

It belongs to the universal ribosomal protein uL6 family. In terms of assembly, part of the 50S ribosomal subunit.

This protein binds to the 23S rRNA, and is important in its secondary structure. It is located near the subunit interface in the base of the L7/L12 stalk, and near the tRNA binding site of the peptidyltransferase center. This chain is Large ribosomal subunit protein uL6, found in Thermoplasma volcanium (strain ATCC 51530 / DSM 4299 / JCM 9571 / NBRC 15438 / GSS1).